Consider the following 243-residue polypeptide: Leucyl/phenylalanyl-tRNA--protein transferase (243 aa).

This sequence belongs to the L/F-transferase family.

It is found in the cytoplasm. It catalyses the reaction N-terminal L-lysyl-[protein] + L-leucyl-tRNA(Leu) = N-terminal L-leucyl-L-lysyl-[protein] + tRNA(Leu) + H(+). The catalysed reaction is N-terminal L-arginyl-[protein] + L-leucyl-tRNA(Leu) = N-terminal L-leucyl-L-arginyl-[protein] + tRNA(Leu) + H(+). It carries out the reaction L-phenylalanyl-tRNA(Phe) + an N-terminal L-alpha-aminoacyl-[protein] = an N-terminal L-phenylalanyl-L-alpha-aminoacyl-[protein] + tRNA(Phe). Functions in the N-end rule pathway of protein degradation where it conjugates Leu, Phe and, less efficiently, Met from aminoacyl-tRNAs to the N-termini of proteins containing an N-terminal arginine or lysine. The chain is Leucyl/phenylalanyl-tRNA--protein transferase from Vibrio cholerae serotype O1 (strain ATCC 39315 / El Tor Inaba N16961).